Here is a 159-residue protein sequence, read N- to C-terminus: MINEYGYRPNVGIVIGNFNGQVLWARRYKQNAWQFPQGGINSGETAEQAMFRELFEEVGLRPKDVRILTTTRYWLKYKIPHQFIRWDAKPICIGQKQKWFLLQLVCKDTRINIQCGKKPEFDSWKWVSFWYPLSQVVFFKRNVYRRMMKEFSRAIMLPE.

The 144-residue stretch at 6 to 149 folds into the Nudix hydrolase domain; sequence GYRPNVGIVI…KRNVYRRMMK (144 aa). The Nudix box signature appears at 38–59; sequence GGINSGETAEQAMFRELFEEVG.

The protein belongs to the Nudix hydrolase family. RppH subfamily. The cofactor is a divalent metal cation.

In terms of biological role, accelerates the degradation of transcripts by removing pyrophosphate from the 5'-end of triphosphorylated RNA, leading to a more labile monophosphorylated state that can stimulate subsequent ribonuclease cleavage. The sequence is that of RNA pyrophosphohydrolase from Baumannia cicadellinicola subsp. Homalodisca coagulata.